The following is a 658-amino-acid chain: ATP-dependent RNA helicase MSS116, mitochondrial (658 aa).

The transit peptide at 1-35 (MFRVTGIATARAVALQPFRAPLGVIRRFGISATAS) directs the protein to the mitochondrion. Positions 40 to 79 (HGHDMQSRNGSRWDSRRQGDRRSSRWEGRGSDREDGERGS) are enriched in basic and acidic residues. The disordered stretch occupies residues 40 to 104 (HGHDMQSRNG…DGAAREGFSL (65 aa)). The short motif at 126–154 (TLVEEGVLSNELYEMLQSRGFDKLTPVQQ) is the Q motif element. Residues 158 to 343 (KPILQTEHDV…NSIMNHAKCL (186 aa)) form the Helicase ATP-binding domain. 171 to 178 (AKTGTGKT) provides a ligand contact to ATP. Positions 284 to 287 (DEAD) match the DEAD box motif. A Helicase C-terminal domain is found at 372–528 (NITASLYKIR…TFDAAAQELS (157 aa)).

It belongs to the DEAD box helicase family. DDX18/HAS1 subfamily.

The protein localises to the mitochondrion matrix. The enzyme catalyses ATP + H2O = ADP + phosphate + H(+). Functionally, ATP-dependent RNA helicase required for mitochondrial splicing of group I and II introns. Also required for efficient mitochondrial translation. The chain is ATP-dependent RNA helicase MSS116, mitochondrial (MSS116) from Eremothecium gossypii (strain ATCC 10895 / CBS 109.51 / FGSC 9923 / NRRL Y-1056) (Yeast).